Reading from the N-terminus, the 310-residue chain is N-acyl-aromatic-L-amino acid amidohydrolase (carboxylate-forming) (310 aa).

Residues His20 and Glu23 each coordinate Zn(2+). Substrate contacts are provided by residues Arg62 and 69–70; that span reads NR. His113 provides a ligand contact to Zn(2+). Substrate contacts are provided by Glu176 and Tyr286.

The protein belongs to the AspA/AstE family. Aspartoacylase subfamily. In terms of assembly, homotetramer. Zn(2+) is required as a cofactor.

It is found in the apical cell membrane. Its subcellular location is the cytoplasm. It carries out the reaction an N-acyl-aromatic L-alpha-amino acid + H2O = an aromatic L-alpha-amino acid + a carboxylate. The enzyme catalyses an N-acetyl-L-cysteine-S-conjugate + H2O = an S-substituted L-cysteine + acetate. In terms of biological role, plays an important role in deacetylating mercapturic acids in kidney proximal tubules. The polypeptide is N-acyl-aromatic-L-amino acid amidohydrolase (carboxylate-forming) (acy3) (Xenopus tropicalis (Western clawed frog)).